The chain runs to 432 residues: Trigger factor (432 aa).

The 86-residue stretch at G163–P248 folds into the PPIase FKBP-type domain.

The protein belongs to the FKBP-type PPIase family. Tig subfamily.

The protein resides in the cytoplasm. The catalysed reaction is [protein]-peptidylproline (omega=180) = [protein]-peptidylproline (omega=0). Functionally, involved in protein export. Acts as a chaperone by maintaining the newly synthesized protein in an open conformation. Functions as a peptidyl-prolyl cis-trans isomerase. This Thermoanaerobacter pseudethanolicus (strain ATCC 33223 / 39E) (Clostridium thermohydrosulfuricum) protein is Trigger factor.